The chain runs to 268 residues: 4-hydroxy-tetrahydrodipicolinate reductase (268 aa).

Residues 9–14, Glu-35, 99–101, and 123–126 each bind NAD(+); these read GVCGRM, GTT, and APNY. His-156 acts as the Proton donor/acceptor in catalysis. Position 157 (His-157) interacts with (S)-2,3,4,5-tetrahydrodipicolinate. Lys-160 (proton donor) is an active-site residue. A (S)-2,3,4,5-tetrahydrodipicolinate-binding site is contributed by 166-167; sequence GT.

Belongs to the DapB family.

It is found in the cytoplasm. The catalysed reaction is (S)-2,3,4,5-tetrahydrodipicolinate + NAD(+) + H2O = (2S,4S)-4-hydroxy-2,3,4,5-tetrahydrodipicolinate + NADH + H(+). The enzyme catalyses (S)-2,3,4,5-tetrahydrodipicolinate + NADP(+) + H2O = (2S,4S)-4-hydroxy-2,3,4,5-tetrahydrodipicolinate + NADPH + H(+). It functions in the pathway amino-acid biosynthesis; L-lysine biosynthesis via DAP pathway; (S)-tetrahydrodipicolinate from L-aspartate: step 4/4. In terms of biological role, catalyzes the conversion of 4-hydroxy-tetrahydrodipicolinate (HTPA) to tetrahydrodipicolinate. This chain is 4-hydroxy-tetrahydrodipicolinate reductase, found in Magnetococcus marinus (strain ATCC BAA-1437 / JCM 17883 / MC-1).